We begin with the raw amino-acid sequence, 303 residues long: Protein bottleneck (303 aa).

2 disordered regions span residues Ser-102–Thr-142 and Val-185–Arg-272. Composition is skewed to low complexity over residues Arg-115–Glu-138 and Val-185–Ser-197. The segment covering Ala-260 to Arg-272 has biased composition (polar residues).

As to expression, restricted to the blastoderm.

It is found in the cytoplasm. The protein resides in the cytoskeleton. In terms of biological role, acts as a regulator of the microfilament network governing cellularization of the embryo. Determines the timing of a key conformational transition in the cortical microfilament network: the proper coordination of membrane invagination and basal closure of the cells. To do this, bnk possibly physically links neighboring contractile units of the early cycle 14 microfilament network in a manner that prevents basal constriction until the proper stage has been reached. Bnk together with nullo and Sry-alpha may provide auxiliary functions, by acting both to stabilize a large and dynamic microfilament structure and regulate its functions. The chain is Protein bottleneck (bnk) from Drosophila melanogaster (Fruit fly).